We begin with the raw amino-acid sequence, 880 residues long: Alanine--tRNA ligase (880 aa).

Positions 567, 571, 669, and 673 each coordinate Zn(2+).

Belongs to the class-II aminoacyl-tRNA synthetase family. The cofactor is Zn(2+).

The protein localises to the cytoplasm. It catalyses the reaction tRNA(Ala) + L-alanine + ATP = L-alanyl-tRNA(Ala) + AMP + diphosphate. Catalyzes the attachment of alanine to tRNA(Ala) in a two-step reaction: alanine is first activated by ATP to form Ala-AMP and then transferred to the acceptor end of tRNA(Ala). Also edits incorrectly charged Ser-tRNA(Ala) and Gly-tRNA(Ala) via its editing domain. This chain is Alanine--tRNA ligase, found in Bacillus anthracis.